The primary structure comprises 375 residues: Digeranylgeranylglycerophospholipid reductase 1 (375 aa).

Residues Ala13, Glu32, Cys43, Ala44, Gly46, Arg92, Ala116, Asp275, Gly287, and Leu288 each coordinate FAD. Position 367 (Gly367) interacts with a 2,3-bis-O-(geranylgeranyl)-sn-glycerol 1-phospholipid.

It belongs to the geranylgeranyl reductase family. DGGGPL reductase subfamily. The cofactor is FAD.

It carries out the reaction a 2,3-bis-O-phytanyl-sn-glycerol 1-phospholipid + 8 A = a 2,3-bis-O-(geranylgeranyl)-sn-glycerol 1-phospholipid + 8 AH2. It catalyses the reaction 2,3-bis-O-(phytanyl)-sn-glycerol 1-phosphate + 8 A = 2,3-bis-O-(geranylgeranyl)-sn-glycerol 1-phosphate + 8 AH2. The enzyme catalyses CDP-2,3-bis-O-(geranylgeranyl)-sn-glycerol + 8 AH2 = CDP-2,3-bis-O-(phytanyl)-sn-glycerol + 8 A. The catalysed reaction is archaetidylserine + 8 AH2 = 2,3-bis-O-phytanyl-sn-glycero-3-phospho-L-serine + 8 A. Its pathway is membrane lipid metabolism; glycerophospholipid metabolism. Its function is as follows. Is involved in the reduction of 2,3-digeranylgeranylglycerophospholipids (unsaturated archaeols) into 2,3-diphytanylglycerophospholipids (saturated archaeols) in the biosynthesis of archaeal membrane lipids. Catalyzes the formation of archaetidic acid (2,3-di-O-phytanyl-sn-glyceryl phosphate) from 2,3-di-O-geranylgeranylglyceryl phosphate (DGGGP) via the hydrogenation of each double bond of the isoprenoid chains. Is also probably able to reduce double bonds of geranyl groups in CDP-2,3-bis-O-(geranylgeranyl)-sn-glycerol and archaetidylserine, thus acting at various stages in the biosynthesis of archaeal membrane lipids. This chain is Digeranylgeranylglycerophospholipid reductase 1, found in Methanopyrus kandleri (strain AV19 / DSM 6324 / JCM 9639 / NBRC 100938).